We begin with the raw amino-acid sequence, 261 residues long: Ice-binding protein (261 aa).

The signal sequence occupies residues Met1–Gly20. N-linked (GlcNAc...) asparagine glycosylation is present at Asn185.

The protein belongs to the ice-binding protein family. Homodimer. Dimerization is not required for the thermal hysteresis (TH) activity. In terms of processing, glycosylated. Glycosylation is not required for the thermal hysteresis (TH) activity. Glycosylation may increase stability and secretion of this protein.

The protein resides in the secreted. Functionally, confers freeze tolerance. Binds to the surface of ice crystals and inhibits their growth. Has low thermal hysteresis (TH) activity, which is the ability to lower the freezing point of an aqueous solution below its melting point. The TH activity of this protein is approximately 0.2 degrees Celsius at 50 uM and 0.3 degrees Celsius at 400 uM. The protein is Ice-binding protein of Leucosporidium sp. (strain AY30) (Arctic yeast).